Here is a 656-residue protein sequence, read N- to C-terminus: DNA topoisomerase 3 (656 aa).

The 155-residue stretch at 2–156 (KVLCVAEKNS…QVYRAVFSHL (155 aa)) folds into the Toprim domain. A Topo IA-type catalytic domain is found at 172–635 (DMKSVHAVGT…DIVEKYRKYW (464 aa)). Residue Tyr-356 is the O-(5'-phospho-DNA)-tyrosine intermediate of the active site.

Belongs to the type IA topoisomerase family. In terms of assembly, forms a complex with SGS1 and RMI1. Interacts with SGS1.

It carries out the reaction ATP-independent breakage of single-stranded DNA, followed by passage and rejoining.. Its function is as follows. Releases the supercoiling and torsional tension of DNA introduced during the DNA replication and transcription by transiently cleaving and rejoining one strand of the DNA duplex. Introduces a single-strand break via transesterification at a target site in duplex DNA. The scissile phosphodiester is attacked by the catalytic tyrosine of the enzyme, resulting in the formation of a DNA-(5'-phosphotyrosyl)-enzyme intermediate and the expulsion of a 3'-OH DNA strand. The free DNA strand than undergoes passage around the unbroken strand thus removing DNA supercoils. Finally, in the religation step, the DNA 3'-OH attacks the covalent intermediate to expel the active-site tyrosine and restore the DNA phosphodiester backbone. Essential for proper chromosome segregation in both meiosis and mitosis. Weakly relaxes negative supercoils and displays a distinct preference for binding single-stranded DNA. The TOP3-SGS1 protein complex may function as a eukaryotic reverse gyrase introducing positive supercoils into extrachromosomal ribosomal DNA rings. This Saccharomyces cerevisiae (strain ATCC 204508 / S288c) (Baker's yeast) protein is DNA topoisomerase 3 (TOP3).